Consider the following 475-residue polypeptide: Eukaryotic translation initiation factor 3 subunit L (475 aa).

The region spanning 257 to 451 (DAIRMFSHIL…DLDYAMQGDL (195 aa)) is the PCI domain.

It belongs to the eIF-3 subunit L family. As to quaternary structure, component of the eukaryotic translation initiation factor 3 (eIF-3) complex.

It is found in the cytoplasm. Its function is as follows. Component of the eukaryotic translation initiation factor 3 (eIF-3) complex, which is involved in protein synthesis of a specialized repertoire of mRNAs and, together with other initiation factors, stimulates binding of mRNA and methionyl-tRNAi to the 40S ribosome. The eIF-3 complex specifically targets and initiates translation of a subset of mRNAs involved in cell proliferation. The protein is Eukaryotic translation initiation factor 3 subunit L of Sclerotinia sclerotiorum (strain ATCC 18683 / 1980 / Ss-1) (White mold).